Reading from the N-terminus, the 245-residue chain is 5-oxoprolinase subunit A (245 aa).

It belongs to the LamB/PxpA family. As to quaternary structure, forms a complex composed of PxpA, PxpB and PxpC.

It carries out the reaction 5-oxo-L-proline + ATP + 2 H2O = L-glutamate + ADP + phosphate + H(+). Functionally, catalyzes the cleavage of 5-oxoproline to form L-glutamate coupled to the hydrolysis of ATP to ADP and inorganic phosphate. The sequence is that of 5-oxoprolinase subunit A from Chromobacterium violaceum (strain ATCC 12472 / DSM 30191 / JCM 1249 / CCUG 213 / NBRC 12614 / NCIMB 9131 / NCTC 9757 / MK).